The primary structure comprises 390 residues: UPF0496 protein At1g20180 (390 aa).

Transmembrane regions (helical) follow at residues 228-248 (LGGY…LIIA) and 250-270 (HSIL…FCLL).

Belongs to the UPF0496 family.

The protein localises to the membrane. This chain is UPF0496 protein At1g20180, found in Arabidopsis thaliana (Mouse-ear cress).